We begin with the raw amino-acid sequence, 134 residues long: Cytochrome b (134 aa).

3 helical membrane-spanning segments follow: residues 33–53 (FGSL…FLAM), 77–98 (WVLR…YVHV), and 113–133 (WNVG…GYVL). Heme b is bound by residues histidine 83 and histidine 97.

This sequence belongs to the cytochrome b family. The cytochrome bc1 complex contains 11 subunits: 3 respiratory subunits (MT-CYB, CYC1 and UQCRFS1), 2 core proteins (UQCRC1 and UQCRC2) and 6 low-molecular weight proteins (UQCRH/QCR6, UQCRB/QCR7, UQCRQ/QCR8, UQCR10/QCR9, UQCR11/QCR10 and a cleavage product of UQCRFS1). This cytochrome bc1 complex then forms a dimer. It depends on heme b as a cofactor.

The protein resides in the mitochondrion inner membrane. Functionally, component of the ubiquinol-cytochrome c reductase complex (complex III or cytochrome b-c1 complex) that is part of the mitochondrial respiratory chain. The b-c1 complex mediates electron transfer from ubiquinol to cytochrome c. Contributes to the generation of a proton gradient across the mitochondrial membrane that is then used for ATP synthesis. The chain is Cytochrome b (MT-CYB) from Anoura caudifer (Hairy-legged long-tongued bat).